The primary structure comprises 63 residues: Prokaryotic ubiquitin-like protein UBact (63 aa).

The segment at 1–63 is disordered; sequence MSGRSTFGRF…SRRYRQRTGE (63 aa). A compositionally biased stretch (basic and acidic residues) spans 17–50; sequence PWERKPGDDEGGPKRPKVERPDTNDLLKRMRRVD. Residue E63 forms an Isoglutamyl lysine isopeptide (Glu-Lys) (interchain with K-? in acceptor proteins) linkage.

Belongs to the ubiquitin-like protein UBact family.

Its function is as follows. May function as a protein modifier covalently attached to lysine residues of substrate proteins. This may serve to target the modified proteins for degradation by proteasomes. The sequence is that of Prokaryotic ubiquitin-like protein UBact from Handelsmanbacteria sp. (strain RIFCSPLOWO2_12_FULL_64_10).